The sequence spans 305 residues: Myb-like transcriptional regulator basR (305 aa).

3 consecutive Myb-like domains span residues 5 to 59, 60 to 110, and 111 to 162; these read RRRW…YNRF, TGGL…HHCL, and NPEL…TILS. The interval 175–215 is disordered; that stretch reads PCCDSPSPSKSSRRPPSTPTSTPQVPGSRQGSSYDPYDYGS. Polar residues predominate over residues 198–207; sequence QVPGSRQGSS.

It is found in the nucleus. In terms of biological role, transcription regulator that acts as a central regulatory node for the integration of external bacterial signals leading to the regulation of secondary metabolite gene clusters such as orsellinic, lecanoric acid, cichorine, 2,4-dihydroxy-3-methyl-6-(2-oxopropyl)benzaldehyde (dba), emericellamide or microperfuranone clusters. This chain is Myb-like transcriptional regulator basR, found in Emericella nidulans (strain FGSC A4 / ATCC 38163 / CBS 112.46 / NRRL 194 / M139) (Aspergillus nidulans).